We begin with the raw amino-acid sequence, 445 residues long: Ribosomal protein uS12 methylthiotransferase RimO (445 aa).

Residues 4–119 form the MTTase N-terminal domain; the sequence is IKVALVSLGC…LLESIKVFLK (116 aa). [4Fe-4S] cluster is bound by residues C13, C48, C82, C156, C160, and C163. The region spanning 142 to 372 is the Radical SAM core domain; it reads TTPTYTAYVR…MILQQSISKD (231 aa). In terms of domain architecture, TRAM spans 375 to 441; that stretch reads KEKIGKIYEV…EYDLIGVVYN (67 aa).

It belongs to the methylthiotransferase family. RimO subfamily. [4Fe-4S] cluster serves as cofactor.

It localises to the cytoplasm. It catalyses the reaction L-aspartate(89)-[ribosomal protein uS12]-hydrogen + (sulfur carrier)-SH + AH2 + 2 S-adenosyl-L-methionine = 3-methylsulfanyl-L-aspartate(89)-[ribosomal protein uS12]-hydrogen + (sulfur carrier)-H + 5'-deoxyadenosine + L-methionine + A + S-adenosyl-L-homocysteine + 2 H(+). In terms of biological role, catalyzes the methylthiolation of an aspartic acid residue of ribosomal protein uS12. The chain is Ribosomal protein uS12 methylthiotransferase RimO from Clostridium botulinum (strain Okra / Type B1).